Consider the following 347-residue polypeptide: Ribosomal RNA small subunit methyltransferase H (347 aa).

S-adenosyl-L-methionine-binding positions include Gly-47 to Tyr-49, Asp-64, Phe-91, Asp-114, and Gln-121. Residues Pro-291–Ser-347 form a disordered region.

It belongs to the methyltransferase superfamily. RsmH family.

The protein resides in the cytoplasm. The catalysed reaction is cytidine(1402) in 16S rRNA + S-adenosyl-L-methionine = N(4)-methylcytidine(1402) in 16S rRNA + S-adenosyl-L-homocysteine + H(+). Functionally, specifically methylates the N4 position of cytidine in position 1402 (C1402) of 16S rRNA. In Brucella anthropi (strain ATCC 49188 / DSM 6882 / CCUG 24695 / JCM 21032 / LMG 3331 / NBRC 15819 / NCTC 12168 / Alc 37) (Ochrobactrum anthropi), this protein is Ribosomal RNA small subunit methyltransferase H.